A 483-amino-acid chain; its full sequence is ATP synthase subunit beta (483 aa).

ATP is bound at residue 169–176; that stretch reads GGAGVGKT.

Belongs to the ATPase alpha/beta chains family. F-type ATPases have 2 components, CF(1) - the catalytic core - and CF(0) - the membrane proton channel. CF(1) has five subunits: alpha(3), beta(3), gamma(1), delta(1), epsilon(1). CF(0) has three main subunits: a(1), b(2) and c(9-12). The alpha and beta chains form an alternating ring which encloses part of the gamma chain. CF(1) is attached to CF(0) by a central stalk formed by the gamma and epsilon chains, while a peripheral stalk is formed by the delta and b chains.

It localises to the cell membrane. The catalysed reaction is ATP + H2O + 4 H(+)(in) = ADP + phosphate + 5 H(+)(out). Functionally, produces ATP from ADP in the presence of a proton gradient across the membrane. The catalytic sites are hosted primarily by the beta subunits. The chain is ATP synthase subunit beta from Rhodococcus jostii (strain RHA1).